The primary structure comprises 229 residues: Platelet-activating factor acetylhydrolase IB subunit alpha2 (229 aa).

N-acetylserine is present on Ser2. Ser2 carries the phosphoserine modification. The active site involves Ser48. Phosphoserine is present on Ser64. Active-site residues include Asp193 and His196. The residue at position 220 (Thr220) is a Phosphothreonine.

Belongs to the 'GDSL' lipolytic enzyme family. Platelet-activating factor acetylhydrolase IB beta/gamma subunits subfamily. In terms of assembly, forms a catalytic dimer which is either homodimer (alpha2/alpha2 homodimer) or heterodimer with PAFAH1B3 (alpha2/alpha1 heterodimer). Component of the cytosolic (PAF-AH (I)) heterotetrameric enzyme, which is composed of PAFAH1B1 (beta), PAFAH1B2 (alpha2) and PAFAH1B3 (alpha1) subunits. The catalytic activity of the enzyme resides in the alpha1 (PAFAH1B3) and alpha2 (PAFAH1B2) subunits, whereas the beta subunit (PAFAH1B1) has regulatory activity. Trimer formation is not essential for the catalytic activity. Interacts (homodimer form) with PAFAH1B1 (homodimer form); PAFAH1B2 competes with NDEL1 for PAFAH1B1 binding. Interacts with VLDLR; this interaction may modulate the Reelin pathway.

It localises to the cytoplasm. The enzyme catalyses a 1-O-alkyl-2-acetyl-sn-glycero-3-phosphocholine + H2O = a 1-O-alkyl-sn-glycero-3-phosphocholine + acetate + H(+). The catalysed reaction is 1-O-hexadecyl-2-acetyl-sn-glycero-3-phosphocholine + H2O = 1-O-hexadecyl-sn-glycero-3-phosphocholine + acetate + H(+). It carries out the reaction 1-O-hexadecyl-2-acetyl-sn-glycero-3-phosphate + H2O = 1-O-hexadecyl-sn-glycero-3-phosphate + acetate + H(+). It catalyses the reaction 1-O-hexadecyl-2-acetyl-sn-glycero-3-phosphoethanolamine + H2O = 1-O-hexadecyl-sn-glycero-3-phosphoethanolamine + acetate + H(+). Its activity is regulated as follows. Beta subunit (PAFAH1B1) stimulates the acetylhydrolase activity of the alpha2/alpha2 catalytic homodimer. Its function is as follows. Alpha2 catalytic subunit of the cytosolic type I platelet-activating factor (PAF) acetylhydrolase (PAF-AH (I)) heterotetrameric enzyme that catalyzes the hydrolyze of the acetyl group at the sn-2 position of PAF and its analogs and modulates the action of PAF. The activity and substrate specificity of PAF-AH (I) are affected by its subunit composition. The alpha2/alpha2 homodimer (PAFAH1B2/PAFAH1B2 homodimer) hydrolyzes PAF and 1-O-alkyl-2-acetyl-sn-glycero-3-phosphorylethanolamine (AAGPE) more efficiently than 1-O-alkyl-2-acetyl-sn-glycero-3-phosphoric acid (AAGPA). In contrast, the alpha1/alpha2 heterodimer(PAFAH1B3/PAFAH1B3 heterodimer) hydrolyzes AAGPA more efficiently than PAF, but has little hydrolytic activity towards AAGPE. May play a role in male germ cell meiosis during the late pachytenestage and meiotic divisions as well as early spermiogenesis. The polypeptide is Platelet-activating factor acetylhydrolase IB subunit alpha2 (Mus musculus (Mouse)).